A 1101-amino-acid polypeptide reads, in one-letter code: Cytospin-A (1101 aa).

2 disordered regions span residues Met-1 to Ser-170 and Ser-280 to Ala-366. Polar residues-rich tracts occupy residues Glu-29 to Ala-48 and Ala-64 to Ser-86. The span at Arg-93 to Ala-110 shows a compositional bias: low complexity. Composition is skewed to basic and acidic residues over residues Gly-114–Arg-125 and Gly-151–Ser-165. The stretch at Lys-162–Phe-254 forms a coiled coil. Positions Leu-333–Thr-355 are enriched in low complexity. 2 coiled-coil regions span residues Cys-373–Leu-427 and Gln-492–Val-785. Residues Ser-923–Ile-978 are disordered. Residues Arg-929–Ser-939 show a composition bias toward basic and acidic residues. Positions Thr-953–Arg-975 are enriched in low complexity. Residues Gly-995–Glu-1100 enclose the Calponin-homology (CH) domain.

The protein belongs to the cytospin-A family. May interact with both microtubules and actin cytoskeleton.

Its subcellular location is the cytoplasm. It localises to the cytoskeleton. It is found in the spindle. The protein localises to the cell junction. The protein resides in the gap junction. In terms of biological role, involved in cytokinesis and spindle organization. May play a role in actin cytoskeleton organization and microtubule stabilization and hence required for proper cell adhesion and migration. The sequence is that of Cytospin-A (specc1l) from Xenopus tropicalis (Western clawed frog).